The sequence spans 284 residues: MTAHLIDGKAIAASLRQQIAQRVVERRQQGLRTPGLAVILVGTDPASQVYVSHKRKDCEEVGFISQAFDLPSETTQQALTELIDRLNDDPAVDGILLQLPLPAHLDASLLLERIRPDKDVDGFHPYNIGRLAQRIPLLRPCTPKGIMTLLESTGQDLYGMNAVIVGASNIVGRPMAMELLLAGCTVTVCHRFTKDLAGHVGRADLVVVAAGKPGLVKGEWVKEGAIVIDVGINRQEDGKLVGDVVYETALPRAGWITPVPGGVGPMTRACLLENTLYAAEELHK.

Residues 166–168 (GAS) and I232 contribute to the NADP(+) site.

This sequence belongs to the tetrahydrofolate dehydrogenase/cyclohydrolase family. In terms of assembly, homodimer.

It carries out the reaction (6R)-5,10-methylene-5,6,7,8-tetrahydrofolate + NADP(+) = (6R)-5,10-methenyltetrahydrofolate + NADPH. The catalysed reaction is (6R)-5,10-methenyltetrahydrofolate + H2O = (6R)-10-formyltetrahydrofolate + H(+). It participates in one-carbon metabolism; tetrahydrofolate interconversion. In terms of biological role, catalyzes the oxidation of 5,10-methylenetetrahydrofolate to 5,10-methenyltetrahydrofolate and then the hydrolysis of 5,10-methenyltetrahydrofolate to 10-formyltetrahydrofolate. This Pseudomonas putida (strain ATCC 47054 / DSM 6125 / CFBP 8728 / NCIMB 11950 / KT2440) protein is Bifunctional protein FolD 2.